Reading from the N-terminus, the 494-residue chain is Ketol-acid reductoisomerase (NADP(+)) (494 aa).

Residues 14–208 (LDQLGRCRFM…GGHRAGCLES (195 aa)) enclose the KARI N-terminal Rossmann domain. Residues 45 to 48 (CGAQ), Arg-68, Arg-76, Ser-78, and 108 to 110 (DKQ) contribute to the NADP(+) site. His-132 is a catalytic residue. Gly-158 lines the NADP(+) pocket. KARI C-terminal knotted domains are found at residues 209–344 (SFVA…NYPA) and 345–487 (SDVE…MSDM). The Mg(2+) site is built by Asp-217, Glu-221, Glu-389, and Glu-393. Ser-414 contributes to the substrate binding site.

Belongs to the ketol-acid reductoisomerase family. The cofactor is Mg(2+).

The catalysed reaction is (2R)-2,3-dihydroxy-3-methylbutanoate + NADP(+) = (2S)-2-acetolactate + NADPH + H(+). The enzyme catalyses (2R,3R)-2,3-dihydroxy-3-methylpentanoate + NADP(+) = (S)-2-ethyl-2-hydroxy-3-oxobutanoate + NADPH + H(+). Its pathway is amino-acid biosynthesis; L-isoleucine biosynthesis; L-isoleucine from 2-oxobutanoate: step 2/4. It participates in amino-acid biosynthesis; L-valine biosynthesis; L-valine from pyruvate: step 2/4. In terms of biological role, involved in the biosynthesis of branched-chain amino acids (BCAA). Catalyzes an alkyl-migration followed by a ketol-acid reduction of (S)-2-acetolactate (S2AL) to yield (R)-2,3-dihydroxy-isovalerate. In the isomerase reaction, S2AL is rearranged via a Mg-dependent methyl migration to produce 3-hydroxy-3-methyl-2-ketobutyrate (HMKB). In the reductase reaction, this 2-ketoacid undergoes a metal-dependent reduction by NADPH to yield (R)-2,3-dihydroxy-isovalerate. In Vibrio atlanticus (strain LGP32) (Vibrio splendidus (strain Mel32)), this protein is Ketol-acid reductoisomerase (NADP(+)).